A 305-amino-acid chain; its full sequence is GMP synthase [glutamine-hydrolyzing] subunit B (305 aa).

Positions Val-2–Arg-184 constitute a GMPS ATP-PPase domain. Ser-29 to Ser-35 contributes to the ATP binding site.

As to quaternary structure, heterodimer composed of a glutamine amidotransferase subunit (A) and a GMP-binding subunit (B).

It carries out the reaction XMP + L-glutamine + ATP + H2O = GMP + L-glutamate + AMP + diphosphate + 2 H(+). The protein operates within purine metabolism; GMP biosynthesis; GMP from XMP (L-Gln route): step 1/1. In terms of biological role, catalyzes the synthesis of GMP from XMP. The chain is GMP synthase [glutamine-hydrolyzing] subunit B from Methanosarcina barkeri (strain Fusaro / DSM 804).